Reading from the N-terminus, the 364-residue chain is Alanine racemase (364 aa).

Residue lysine 34 is the Proton acceptor; specific for D-alanine of the active site. An N6-(pyridoxal phosphate)lysine modification is found at lysine 34. Arginine 129 lines the substrate pocket. Catalysis depends on tyrosine 259, which acts as the Proton acceptor; specific for L-alanine. A substrate-binding site is contributed by methionine 307.

Belongs to the alanine racemase family. Pyridoxal 5'-phosphate is required as a cofactor.

It catalyses the reaction L-alanine = D-alanine. The protein operates within amino-acid biosynthesis; D-alanine biosynthesis; D-alanine from L-alanine: step 1/1. Its function is as follows. Catalyzes the interconversion of L-alanine and D-alanine. May also act on other amino acids. This chain is Alanine racemase (alr), found in Coxiella burnetii (strain CbuG_Q212) (Coxiella burnetii (strain Q212)).